The chain runs to 123 residues: Large ribosomal subunit protein uL18 (123 aa).

The protein belongs to the universal ribosomal protein uL18 family. In terms of assembly, part of the 50S ribosomal subunit; part of the 5S rRNA/L5/L18/L25 subcomplex. Contacts the 5S and 23S rRNAs.

Functionally, this is one of the proteins that bind and probably mediate the attachment of the 5S RNA into the large ribosomal subunit, where it forms part of the central protuberance. The protein is Large ribosomal subunit protein uL18 of Chlamydia trachomatis serovar A (strain ATCC VR-571B / DSM 19440 / HAR-13).